The primary structure comprises 370 residues: tRNA-specific 2-thiouridylase MnmA (370 aa).

Residues 11 to 18 (GMSGGVDS) and Met37 each bind ATP. Residues 97 to 99 (NPD) are interaction with target base in tRNA. Cys102 serves as the catalytic Nucleophile. Cys102 and Cys199 form a disulfide bridge. Gly126 contributes to the ATP binding site. The segment at 149 to 151 (KDQ) is interaction with tRNA. Cys199 acts as the Cysteine persulfide intermediate in catalysis. An interaction with tRNA region spans residues 307 to 308 (RY).

This sequence belongs to the MnmA/TRMU family.

The protein resides in the cytoplasm. The catalysed reaction is S-sulfanyl-L-cysteinyl-[protein] + uridine(34) in tRNA + AH2 + ATP = 2-thiouridine(34) in tRNA + L-cysteinyl-[protein] + A + AMP + diphosphate + H(+). In terms of biological role, catalyzes the 2-thiolation of uridine at the wobble position (U34) of tRNA, leading to the formation of s(2)U34. This Staphylococcus saprophyticus subsp. saprophyticus (strain ATCC 15305 / DSM 20229 / NCIMB 8711 / NCTC 7292 / S-41) protein is tRNA-specific 2-thiouridylase MnmA.